Reading from the N-terminus, the 387-residue chain is Flap endonuclease 1 (387 aa).

Residues 1-104 (MGILGLSKLI…GELAKRAERR (104 aa)) are N-domain. Residue Asp34 participates in Mg(2+) binding. Arg47 and Arg70 together coordinate DNA. 5 residues coordinate Mg(2+): Asp86, Glu158, Glu160, Asp179, and Asp181. The I-domain stretch occupies residues 122 to 253 (GIEKFNRRLV…KRAIELINNY (132 aa)). Glu158 lines the DNA pocket. DNA is bound by residues Gly231 and Asp233. Asp233 is a Mg(2+) binding site. Residues 336 to 344 (TQVRLDSFF) form an interaction with PCNA region. Residues 346–387 (TLPSTPNATNAAKRKAEEAKKSANNKKAKTSGGVGGRGRRPK) are disordered.

It belongs to the XPG/RAD2 endonuclease family. FEN1 subfamily. In terms of assembly, interacts with PCNA. Three molecules of FEN1 bind to one PCNA trimer with each molecule binding to one PCNA monomer. PCNA stimulates the nuclease activity without altering cleavage specificity. The cofactor is Mg(2+). Post-translationally, phosphorylated. Phosphorylation upon DNA damage induces relocalization to the nuclear plasma.

Its subcellular location is the nucleus. It localises to the nucleolus. It is found in the nucleoplasm. The protein resides in the mitochondrion. Structure-specific nuclease with 5'-flap endonuclease and 5'-3' exonuclease activities involved in DNA replication and repair. During DNA replication, cleaves the 5'-overhanging flap structure that is generated by displacement synthesis when DNA polymerase encounters the 5'-end of a downstream Okazaki fragment. It enters the flap from the 5'-end and then tracks to cleave the flap base, leaving a nick for ligation. Also involved in the long patch base excision repair (LP-BER) pathway, by cleaving within the apurinic/apyrimidinic (AP) site-terminated flap. Acts as a genome stabilization factor that prevents flaps from equilibrating into structures that lead to duplications and deletions. Also possesses 5'-3' exonuclease activity on nicked or gapped double-stranded DNA, and exhibits RNase H activity. Also involved in replication and repair of rDNA and in repairing mitochondrial DNA. The protein is Flap endonuclease 1 of Drosophila erecta (Fruit fly).